A 441-amino-acid polypeptide reads, in one-letter code: Probable D-serine dehydratase (441 aa).

Lys-101 carries the N6-(pyridoxal phosphate)lysine modification.

This sequence belongs to the serine/threonine dehydratase family. DsdA subfamily. It depends on pyridoxal 5'-phosphate as a cofactor.

It catalyses the reaction D-serine = pyruvate + NH4(+). The sequence is that of Probable D-serine dehydratase from Geobacillus kaustophilus (strain HTA426).